The primary structure comprises 138 residues: Beta-galactosidase (138 aa).

The protein belongs to the glycosyl hydrolase 2 family.

The enzyme catalyses Hydrolysis of terminal non-reducing beta-D-galactose residues in beta-D-galactosides.. This Rhizobium radiobacter (Agrobacterium tumefaciens) protein is Beta-galactosidase (lacZ).